Reading from the N-terminus, the 284-residue chain is Citrate lyase subunit beta-like protein (284 aa).

Substrate is bound by residues Arg74 and Glu129. 2 residues coordinate Mg(2+): Glu129 and Asp155.

This sequence belongs to the HpcH/HpaI aldolase family. Citrate lyase beta subunit-like subfamily. In terms of assembly, homotrimer. Mg(2+) serves as cofactor.

Its function is as follows. May play a role in fatty acid biosynthesis. This chain is Citrate lyase subunit beta-like protein, found in Deinococcus radiodurans (strain ATCC 13939 / DSM 20539 / JCM 16871 / CCUG 27074 / LMG 4051 / NBRC 15346 / NCIMB 9279 / VKM B-1422 / R1).